The chain runs to 279 residues: MIRVASPAKINLFLHITGRRNDGYHELQSIFQLIDLYDWMTFTPRTEAEDNLSITGIEQVDLEQNLIFRAAQLLKLYAKKYCGLNIQIEKQIPMGAGLGGGSSNAATTLLVLNQLWDCGLNLDQLAALGVKLGADVPIFIYGKNAWAEGIGEKLTFVDLDQKQYIILKPDCFISTQLLFSQKTLTRDSNRTTFCAYQLKPSDFGNNFEALARSLYPEVEEAMQYLDQFGQAKLTGTGACVFTEVTPEMNVSEIVQHAPCKSYVVHSLNKSPLSHFMTDI.

Lysine 9 is an active-site residue. Proline 93–serine 103 contacts ATP. Aspartate 135 is a catalytic residue.

It belongs to the GHMP kinase family. IspE subfamily.

The catalysed reaction is 4-CDP-2-C-methyl-D-erythritol + ATP = 4-CDP-2-C-methyl-D-erythritol 2-phosphate + ADP + H(+). It functions in the pathway isoprenoid biosynthesis; isopentenyl diphosphate biosynthesis via DXP pathway; isopentenyl diphosphate from 1-deoxy-D-xylulose 5-phosphate: step 3/6. In terms of biological role, catalyzes the phosphorylation of the position 2 hydroxy group of 4-diphosphocytidyl-2C-methyl-D-erythritol. This is 4-diphosphocytidyl-2-C-methyl-D-erythritol kinase from Acinetobacter baylyi (strain ATCC 33305 / BD413 / ADP1).